The primary structure comprises 247 residues: Vacuolar iron transporter 1 (247 aa).

Over 1-33 the chain is Cytoplasmic; sequence MVIAGVSPPTPSSENLLQEHEEKHFTATDVVRD. The helical transmembrane segment at 34–54 threads the bilayer; sequence VIIGVSDGLTVPFALAAGLSG. The Vacuolar portion of the chain corresponds to 55–60; that stretch reads ANVPSS. A helical transmembrane segment spans residues 61-81; sequence LILTAGIAEVAAGAISMGLGG. Residues 82-167 are Cytoplasmic-facing; it reads YLAAKSEEDH…PRRALESAMT (86 aa). Positions 99, 102, 110, 113, 146, and 150 each coordinate Fe cation. Residues 168-188 form a helical membrane-spanning segment; it reads IALAYVVGGLVPLSPYFFIPF. Residues 189-191 lie on the Vacuolar side of the membrane; sequence AKQ. Residues 192 to 212 form a helical membrane-spanning segment; it reads AMITSIAVTLLALVVFGYIKG. Topologically, residues 213 to 219 are cytoplasmic; that stretch reads RFTGSNP. Residues 220 to 240 traverse the membrane as a helical segment; that stretch reads VLSSIQTAIIGALASAAAYAM. Topologically, residues 241–247 are vacuolar; that stretch reads AKAVQSV.

Belongs to the CCC1 family. Expressed at high levels in the blue epidermal cells of the inner bottom part of the petal (at protein level). No detectable expression in parenchyma and epidermis of the purple segments of the petal, parenchyma of the blue segments, leaf, stem, bulb and root (at protein level). High levels of mRNA in the blue epidermal cells of the inner bottom part of the petal. Low-levels of mRNA in the purple segments of the petal, stem, leaf, root, bulb and pistil.

The protein resides in the vacuole membrane. The enzyme catalyses Fe(2+)(in) = Fe(2+)(out). Its function is as follows. Vacuolar iron transporter involved in the transfer of iron ions from the cytosol to the vacuole for intracellular iron storage. Plays an essential role in the development of blue coloration in tulip petals most likely due to the accumulation of ferrous ions that can form complexes with anthocyanins. This chain is Vacuolar iron transporter 1, found in Tulipa gesneriana (Garden tulip).